The sequence spans 425 residues: Dipeptidase tcpJ (425 aa).

Zn(2+) is bound by residues histidine 46, aspartate 48, and glutamate 158. Positions 185, 259, and 318 each coordinate substrate.

It belongs to the metallo-dependent hydrolases superfamily. Peptidase M19 family. Zn(2+) serves as cofactor.

The enzyme catalyses an L-aminoacyl-L-amino acid + H2O = 2 an L-alpha-amino acid. Its function is as follows. Dipeptidase; part of the gene cluster that mediates the biosynthesis of an unusual class of epipolythiodioxopiperazines (ETPs) lacking the reactive thiol group important for toxicity. Firstly, L-tyrosine is prenylated by tcpD, before undergoing condensation with L-glycine in a reaction catalyzed by the NRPS tcpP leading to the diketopiperazine (DKP) backbone. Afterwards the alpha-carbon of tyrosine is oxidized by the cytochrome P450 tcpC to form a hydroxyl group. However, in contrast other ETP biosynthesis pathways studied so far, tcpC is not able to bishydroxylate the DKP at both alpha-carbon positions, but hydroxylates the alpha-carbon of the tyrosine part and the nitrogen of the glycine part. The next steps involve an alpha,beta-elimination reaction catalyzed by tcpI, a methylation by the methyltransferase tcpN the action of the four enzyme cascade tcpG/K/J/I. Due to a dysfunctional cytochrome P450 monooxygenase tcpC, the pathway leads to the biosynthesis of probable non-toxic metabolites lacking the reactive thiol group. The sequence is that of Dipeptidase tcpJ from Claviceps purpurea (strain 20.1) (Ergot fungus).